Reading from the N-terminus, the 977-residue chain is Disks large-associated protein 1 (977 aa).

Disordered stretches follow at residues 150 to 203 (TKSH…GWWS) and 349 to 371 (KAMG…KVAA). A phosphoserine mark is found at Ser-169, Ser-356, Ser-359, Ser-362, Ser-366, Ser-383, Ser-412, Ser-415, Ser-419, Ser-422, Ser-431, Ser-503, Ser-510, and Ser-562. Phosphothreonine is present on Thr-563. Phosphoserine occurs at positions 565 and 589. Thr-590 bears the Phosphothreonine mark. Phosphoserine occurs at positions 592 and 595. 2 interaction with DYL2 regions span residues 650–661 (LSIGIQVDDAEE) and 672–683 (SKFQSVGVQVEE). Residues 899–965 (WKQMDPLDKK…QNSATESAES (67 aa)) form a disordered region. 2 stretches are compositionally biased toward basic and acidic residues: residues 903–912 (DPLDKKERRA) and 928–943 (IRER…EARK). Residue Ser-932 is modified to Phosphoserine. Over residues 954–963 (VRQNSATESA) the composition is skewed to polar residues. The PDZ-binding motif lies at 975 to 977 (TRL).

This sequence belongs to the SAPAP family. In terms of assembly, interacts with guanylate kinase-like domain of DLG1, DLG2, DLG3, DLG4 and AIP1. Interacts with the PDZ domain of SHANK1, SHANK2 and SHANK3. Found in a complex with DLG4 and SHANK1, SHANK2 or SHANK3. Found in a complex with DLG4 and BEGAIN. Interacts with DYL2 and LRFN1. Interacts with MPP2 (via the SH3-Guanylate kinase-like sub-module). In terms of processing, ubiquitinated by TRIM3; leading to proteasomal degradation. In terms of tissue distribution, expressed in brain.

It is found in the cell membrane. It localises to the postsynaptic density. Its subcellular location is the synapse. Its function is as follows. Part of the postsynaptic scaffold in neuronal cells. The chain is Disks large-associated protein 1 (DLGAP1) from Homo sapiens (Human).